The sequence spans 579 residues: Thiol:disulfide interchange protein DsbD (579 aa).

The first 16 residues, 1-16, serve as a signal peptide directing secretion; that stretch reads MKKLFLFFTLIFTAFA. Disulfide bonds link Cys-124–Cys-129 and Cys-193–Cys-315. A run of 8 helical transmembrane segments spans residues 178–198, 230–250, 254–274, 296–316, 337–357, 376–396, 397–417, and 420–440; these read IFGFFLLGLGLAFTPCVLPML, LTYTLLGLAVAAIGLPFQIAL, YVMIGLSILFVALALSMFGLF, GAFGGAFAMGMIAGLVASPCT, AATLYLLALGMGVPLMLITLF, FGFVMLALPVFLLSRILPEVW, EPRLWAGLATVFFIWFALQMS, and GFGYAIKIISFALAMVTVQPL. The Thioredoxin domain maps to 449–579; that stretch reads TTTQSAVENM…AFSNWLKALH (131 aa). A disulfide bridge links Cys-495 with Cys-498.

The protein belongs to the thioredoxin family. DsbD subfamily.

Its subcellular location is the cell inner membrane. The catalysed reaction is [protein]-dithiol + NAD(+) = [protein]-disulfide + NADH + H(+). The enzyme catalyses [protein]-dithiol + NADP(+) = [protein]-disulfide + NADPH + H(+). Its function is as follows. Required to facilitate the formation of correct disulfide bonds in some periplasmic proteins and for the assembly of the periplasmic c-type cytochromes. Acts by transferring electrons from cytoplasmic thioredoxin to the periplasm. This transfer involves a cascade of disulfide bond formation and reduction steps. The sequence is that of Thiol:disulfide interchange protein DsbD from Haemophilus influenzae (strain 86-028NP).